The primary structure comprises 211 residues: Large ribosomal subunit protein bL25 (211 aa).

This sequence belongs to the bacterial ribosomal protein bL25 family. CTC subfamily. As to quaternary structure, part of the 50S ribosomal subunit; part of the 5S rRNA/L5/L18/L25 subcomplex. Contacts the 5S rRNA. Binds to the 5S rRNA independently of L5 and L18.

This is one of the proteins that binds to the 5S RNA in the ribosome where it forms part of the central protuberance. The chain is Large ribosomal subunit protein bL25 from Anaplasma phagocytophilum (strain HZ).